A 156-amino-acid polypeptide reads, in one-letter code: Large ribosomal subunit protein uL23 (156 aa).

Positions 1–19 are enriched in basic and acidic residues; the sequence is MAPKAKKEAPAPPKVEAKA. Residues 1–67 form a disordered region; the sequence is MAPKAKKEAP…PKYPRKSAPR (67 aa). Ala-2 carries the n,N,N-trimethylalanine modification. Residue Lys-14 forms a Glycyl lysine isopeptide (Lys-Gly) (interchain with G-Cter in SUMO2) linkage. The span at 20–67 shows a compositional bias: basic residues; the sequence is KALKAKKAVLKGVHSHKKKKIRTSPTFRRPKTLRLRRQPKYPRKSAPR. The beta-like import receptor binding (BIB) domain stretch occupies residues 32–74; that stretch reads VHSHKKKKIRTSPTFRRPKTLRLRRQPKYPRKSAPRRNKLDHY. Arg-41 is subject to Citrulline. A Phosphoserine modification is found at Ser-43. Thr-45 is subject to Phosphothreonine. Lys-70 carries the post-translational modification N6-acetyllysine.

This sequence belongs to the universal ribosomal protein uL23 family. In terms of assembly, component of the large ribosomal subunit. Interacts with LYAR and GNL2. Interacts with MDM2; this interaction may promote MDM2-mediated p53/TP53 polyubiquitination. Directly interacts (via BIB domain) with IPO5, IPO7, KPNB1 and TNPO1; these interactions are involved in RPL23A nuclear import for the assembly of ribosomal subunits. Interacts with IPO8. Post-translationally, N-terminus is methylated by METTL11A/NTM1. In terms of processing, citrullinated by PADI4.

Its subcellular location is the cytoplasm. The protein resides in the nucleus. Its function is as follows. Component of the large ribosomal subunit. The ribosome is a large ribonucleoprotein complex responsible for the synthesis of proteins in the cell. Binds a specific region on the 26S rRNA. May promote p53/TP53 degradation possibly through the stimulation of MDM2-mediated TP53 polyubiquitination. The sequence is that of Large ribosomal subunit protein uL23 (RPL23A) from Oryctolagus cuniculus (Rabbit).